A 306-amino-acid polypeptide reads, in one-letter code: Beta-lactamase 1 (306 aa).

A signal peptide spans 1-27 (MILKNKRMLKIGICVGILGLSITSLEA). Ser91 (acyl-ester intermediate) is an active-site residue. Residue Glu187 is the Proton acceptor of the active site. A substrate-binding site is contributed by 253 to 255 (KSG).

It belongs to the class-A beta-lactamase family.

It carries out the reaction a beta-lactam + H2O = a substituted beta-amino acid. Its function is as follows. This protein is a beta-lactamase with a substrate specificity for penicillins. This is Beta-lactamase 1 (blaY) from Bacillus cereus.